We begin with the raw amino-acid sequence, 254 residues long: Insulin-like growth factor-binding protein 4 (254 aa).

Residues 1 to 21 form the signal peptide; it reads MLPFGLVAALLLAAGPRPSLG. Residues 23 to 103 enclose the IGFBP N-terminal domain; the sequence is EAIHCPPCSE…MHGQGVCTEL (81 aa). Intrachain disulfides connect cysteine 27/cysteine 53, cysteine 30/cysteine 55, cysteine 38/cysteine 56, cysteine 44/cysteine 59, cysteine 67/cysteine 80, and cysteine 74/cysteine 100. Residue asparagine 125 is glycosylated (N-linked (GlcNAc...) asparagine). An intrachain disulfide couples cysteine 131 to cysteine 138. The disordered stretch occupies residues 149-169; it reads RSKMKVVGTPREEPRPVPQGS. The region spanning 167–245 is the Thyroglobulin type-1 domain; it reads QGSCQSELHR…GLEPKGELDC (79 aa). 3 disulfides stabilise this stretch: cysteine 170–cysteine 200, cysteine 211–cysteine 222, and cysteine 224–cysteine 245. Serine 251 is modified (phosphoserine).

In terms of assembly, binds IGF2 more than IGF1.

The protein localises to the secreted. In terms of biological role, IGF-binding proteins prolong the half-life of the IGFs and have been shown to either inhibit or stimulate the growth promoting effects of the IGFs on cell culture. They alter the interaction of IGFs with their cell surface receptors. This Rattus norvegicus (Rat) protein is Insulin-like growth factor-binding protein 4 (Igfbp4).